The following is a 353-amino-acid chain: Histidinol-phosphate aminotransferase (353 aa).

Residue K214 is modified to N6-(pyridoxal phosphate)lysine.

The protein belongs to the class-II pyridoxal-phosphate-dependent aminotransferase family. Histidinol-phosphate aminotransferase subfamily. As to quaternary structure, homodimer. Requires pyridoxal 5'-phosphate as cofactor.

It catalyses the reaction L-histidinol phosphate + 2-oxoglutarate = 3-(imidazol-4-yl)-2-oxopropyl phosphate + L-glutamate. It functions in the pathway amino-acid biosynthesis; L-histidine biosynthesis; L-histidine from 5-phospho-alpha-D-ribose 1-diphosphate: step 7/9. This is Histidinol-phosphate aminotransferase from Gloeobacter violaceus (strain ATCC 29082 / PCC 7421).